Reading from the N-terminus, the 281-residue chain is Elongation factor Ts (281 aa).

An involved in Mg(2+) ion dislocation from EF-Tu region spans residues 80-83 (TDFV).

This sequence belongs to the EF-Ts family.

It localises to the cytoplasm. In terms of biological role, associates with the EF-Tu.GDP complex and induces the exchange of GDP to GTP. It remains bound to the aminoacyl-tRNA.EF-Tu.GTP complex up to the GTP hydrolysis stage on the ribosome. The sequence is that of Elongation factor Ts from Vibrio campbellii (strain ATCC BAA-1116).